A 182-amino-acid chain; its full sequence is MSNQELKTTMSKSIEAAQRNFNTIRTGRANTSLLDRISVEYYGAETPLKSLATITTPDSQTIAIQPFDLGSLASIEKAIATSDLGFTPNNDGKIIRINVPPLTEERRKEFCKLASKYAEEGKVALRNIRREAIDRVKKSEKDGDLSEDQSRDEQETIQKETDNFIKDIEKKLSEKEAEILKV.

The tract at residues 136 to 160 (VKKSEKDGDLSEDQSRDEQETIQKE) is disordered.

Belongs to the RRF family.

It localises to the cytoplasm. Functionally, responsible for the release of ribosomes from messenger RNA at the termination of protein biosynthesis. May increase the efficiency of translation by recycling ribosomes from one round of translation to another. The chain is Ribosome-recycling factor from Prochlorococcus marinus (strain NATL2A).